Here is a 433-residue protein sequence, read N- to C-terminus: 3-phosphoshikimate 1-carboxyvinyltransferase (433 aa).

3-phosphoshikimate contacts are provided by lysine 22, serine 23, and arginine 27. Residue lysine 22 participates in phosphoenolpyruvate binding. Positions 94 and 123 each coordinate phosphoenolpyruvate. 3-phosphoshikimate is bound by residues serine 168, glutamine 170, aspartate 319, and lysine 346. Glutamine 170 provides a ligand contact to phosphoenolpyruvate. Residue aspartate 319 is the Proton acceptor of the active site. Residues arginine 350 and arginine 392 each contribute to the phosphoenolpyruvate site.

Belongs to the EPSP synthase family. In terms of assembly, monomer.

Its subcellular location is the cytoplasm. It carries out the reaction 3-phosphoshikimate + phosphoenolpyruvate = 5-O-(1-carboxyvinyl)-3-phosphoshikimate + phosphate. The protein operates within metabolic intermediate biosynthesis; chorismate biosynthesis; chorismate from D-erythrose 4-phosphate and phosphoenolpyruvate: step 6/7. Catalyzes the transfer of the enolpyruvyl moiety of phosphoenolpyruvate (PEP) to the 5-hydroxyl of shikimate-3-phosphate (S3P) to produce enolpyruvyl shikimate-3-phosphate and inorganic phosphate. The chain is 3-phosphoshikimate 1-carboxyvinyltransferase from Roseiflexus sp. (strain RS-1).